The following is an 84-amino-acid chain: Toxin Aah4 (84 aa).

The first 19 residues, 1–19 (MNYLIMFSLALLLVIGVES), serve as a signal peptide directing secretion. One can recognise an LCN-type CS-alpha/beta domain in the interval 21-82 (RDGYIVDSKN…PIKDPSDDCH (62 aa)). 4 disulfides stabilise this stretch: C31/C81, C35/C53, C39/C63, and C43/C65. R84 is a propeptide (removed by a carboxypeptidase).

The protein belongs to the long (4 C-C) scorpion toxin superfamily. Sodium channel inhibitor family. Alpha subfamily. Expressed by the venom gland.

Its subcellular location is the secreted. Its function is as follows. Alpha toxins bind voltage-independently at site-3 of sodium channels (Nav) and inhibit the inactivation of the activated channels, thereby blocking neuronal transmission. This toxin seems to specifically act on Nav1.6/SCN8A sodium channel. In vitro, it inhibits the proliferation of the prostate cancer cell line DU145 (IC(50)=15 uM). It shows low effect on the adhesion of DU145 cells to fibronectin (at 15 uM) and is inactive on DU145 cells migration. In Androctonus australis (Sahara scorpion), this protein is Toxin Aah4.